Here is a 471-residue protein sequence, read N- to C-terminus: Nuclear distribution protein PAC1 (471 aa).

In terms of domain architecture, LisH spans 9–41 (QAEELHKSMIAYLLSVNLSKSAAALREELADSV). Positions 60–87 (TSVVRLQKKIMDLESRNAALQQELDSAT) form a coiled coil. Over residues 83-93 (LDSATPTSLSR) the composition is skewed to polar residues. The interval 83–108 (LDSATPTSLSRRNQDPASWLPRAPAR) is disordered. WD repeat units lie at residues 113 to 154 (SHRG…RTIK), 156 to 196 (HTRA…KNIR), 200 to 247 (GHDH…CVKT), 250 to 289 (GHLD…TKST), 292 to 352 (GHEH…IKTL), 354 to 393 (GHDN…KCVR), 398 to 428 (AHGH…INGQ), and 429 to 467 (GTPS…MNVR). Residues 424-449 (GINGQGTPSMNGVSISTTSKKEDTGG) are disordered. The span at 428–441 (QGTPSMNGVSISTT) shows a compositional bias: polar residues.

This sequence belongs to the WD repeat LIS1/nudF family. In terms of assembly, self-associates. Interacts with NDL1 and dynein.

It is found in the cytoplasm. The protein resides in the cytoskeleton. The protein localises to the spindle pole. Functionally, positively regulates the activity of the minus-end directed microtubule motor protein dynein. May enhance dynein-mediated microtubule sliding by targeting dynein to the microtubule plus end. Required for nuclear migration during vegetative growth as well as development. Required for retrograde early endosome (EE) transport from the hyphal tip. Required for localization of dynein to the mitotic spindle poles. Recruits additional proteins to the dynein complex at SPBs. The sequence is that of Nuclear distribution protein PAC1 from Coccidioides posadasii (strain C735) (Valley fever fungus).